A 207-amino-acid chain; its full sequence is MKKYRDHYFLKAKRENYPARSVYKLKEIDKRFGILKQGMRVLDLGAAPGSWSLGAAEKIGPSGRVLAADIQTTETVFPPNVTFMQEDVFERSAEFEQALSETGPFDVVISDMAPKTTGHKFTDQARSSNLCFEALAVASLHLVEGGSFVVKIFMGPDVEAYVKQMRTLFTAVKSFKPKSSRSESKETFYIGLGFKGLPEFSEQEGED.

5 residues coordinate S-adenosyl-L-methionine: glycine 49, tryptophan 51, aspartate 69, aspartate 87, and aspartate 111. Lysine 151 (proton acceptor) is an active-site residue.

The protein belongs to the class I-like SAM-binding methyltransferase superfamily. RNA methyltransferase RlmE family.

It is found in the cytoplasm. The enzyme catalyses uridine(2552) in 23S rRNA + S-adenosyl-L-methionine = 2'-O-methyluridine(2552) in 23S rRNA + S-adenosyl-L-homocysteine + H(+). Its function is as follows. Specifically methylates the uridine in position 2552 of 23S rRNA at the 2'-O position of the ribose in the fully assembled 50S ribosomal subunit. This is Ribosomal RNA large subunit methyltransferase E from Oleidesulfovibrio alaskensis (strain ATCC BAA-1058 / DSM 17464 / G20) (Desulfovibrio alaskensis).